The primary structure comprises 152 residues: MGRFIFVSFGLLVVFLSLSGTAADCSSGWSSYEGHCYKVFKQSKTWTDAESFCTKQVNGGHLVSIESSGEADFVGQLIAQKIKSAKIHVWIGLRAQNKEKQCSIEWSDGSSISYENWIEEESKKCLGVHIETGFHKWENFYCEQQDPFVCEA.

A signal peptide spans 1–23 (MGRFIFVSFGLLVVFLSLSGTAA). Residues 24–152 (DCSSGWSSYE…EQQDPFVCEA (129 aa)) enclose the C-type lectin domain. Disulfide bonds link C25–C36, C53–C150, and C125–C142. The Ca(2+) site is built by S64, E66, and E70. Residue E151 coordinates Ca(2+).

It belongs to the snaclec family. As to quaternary structure, heterodimer with subunit B of AaACP or agkisacutacin; disulfide-linked. In terms of tissue distribution, expressed by the venom gland.

It localises to the secreted. Its function is as follows. Anticoagulant protein which binds to the gamma-carboxyglutamic acid-domain regions of factors IX (F9) and factor X (F10) in the presence of calcium with a 1 to 1 stoichiometry. Also inhibits platelet aggregation by binding to platelet glycoprotein Ibalpha (GP1BA) and functioning as a blocker of von Willebrand factor (VWF). Is devoid of hemorrhagic and lethal activities. Possesses antithrombotic and thrombolytic activities. Also hydrolyzes the Aalpha-chain of fibrinogen (FGA). Does not affect the Bbeta-chain (FGB) and the gamma chain (FGG). In Deinagkistrodon acutus (Hundred-pace snake), this protein is Snaclec agkisacutacin subunit A.